The chain runs to 420 residues: Replication factor C large subunit (420 aa).

ATP is bound at residue 46–53 (GVQGSGKT).

This sequence belongs to the activator 1 small subunits family. RfcL subfamily. In terms of assembly, heteromultimer composed of small subunits (RfcS) and large subunits (RfcL).

Its function is as follows. Part of the RFC clamp loader complex which loads the PCNA sliding clamp onto DNA. The polypeptide is Replication factor C large subunit (Thermoplasma volcanium (strain ATCC 51530 / DSM 4299 / JCM 9571 / NBRC 15438 / GSS1)).